Consider the following 354-residue polypeptide: Transcription activator of gluconeogenesis ERT1-1 (354 aa).

The segment at 1–29 is disordered; it reads MSFYPILRGPAKQESPPPPPAPKKRRKTA. The segment at residues 32 to 60 is a DNA-binding region (zn(2)-C6 fungal-type); that stretch reads CLHCQKAHLTCDEGRPCARCIKKNMGDQC. Disordered stretches follow at residues 71 to 111 and 128 to 169; these read LVGL…FGSS and DTSS…QGSP. Positions 81-98 are enriched in low complexity; the sequence is QATQQKQQQQQQQQQAVQ. A compositionally biased stretch (polar residues) spans 159-169; the sequence is SQTAGTPQGSP.

Belongs to the ERT1/acuK family.

It localises to the nucleus. Transcription factor which regulates nonfermentable carbon utilization. Activator of gluconeogenetic genes. This chain is Transcription activator of gluconeogenesis ERT1-1 (ERT1-1), found in Yarrowia lipolytica (strain CLIB 122 / E 150) (Yeast).